A 934-amino-acid chain; its full sequence is 2-oxoglutarate dehydrogenase E1 component (934 aa).

This sequence belongs to the alpha-ketoglutarate dehydrogenase family. As to quaternary structure, homodimer. Part of the 2-oxoglutarate dehydrogenase (OGDH) complex composed of E1 (2-oxoglutarate dehydrogenase), E2 (dihydrolipoamide succinyltransferase) and E3 (dihydrolipoamide dehydrogenase); the complex contains multiple copies of the three enzymatic components (E1, E2 and E3). Thiamine diphosphate is required as a cofactor.

It catalyses the reaction N(6)-[(R)-lipoyl]-L-lysyl-[protein] + 2-oxoglutarate + H(+) = N(6)-[(R)-S(8)-succinyldihydrolipoyl]-L-lysyl-[protein] + CO2. Functionally, E1 component of the 2-oxoglutarate dehydrogenase (OGDH) complex which catalyzes the decarboxylation of 2-oxoglutarate, the first step in the conversion of 2-oxoglutarate to succinyl-CoA and CO(2). This chain is 2-oxoglutarate dehydrogenase E1 component, found in Staphylococcus epidermidis (strain ATCC 35984 / DSM 28319 / BCRC 17069 / CCUG 31568 / BM 3577 / RP62A).